The following is an 871-amino-acid chain: Translation initiation factor IF-2 (871 aa).

Positions 1 to 242 (MVDTKNPGDK…PAAKPAPAKQ (242 aa)) are disordered. The span at 68 to 91 (PASARTPAAKAPPARAATPAAPRA) shows a compositional bias: low complexity. Residues 115 to 174 (AKVRAEEERRIAEAEAARRNSKEGIEQAEREAAEARRKAEEERHRQEEEAKRKAEIEAKR) are compositionally biased toward basic and acidic residues. Low complexity-rich tracts occupy residues 182–206 (KPAPAKTTTTTTRAAPPARPAAVAA) and 225–241 (ARPVIAPKPAAKPAPAK). The tr-type G domain occupies 367–538 (PRSPVVTVMG…SLQADLLDLK (172 aa)). Residues 376–383 (GHVDHGKT) form a G1 region. 376 to 383 (GHVDHGKT) contacts GTP. The interval 401 to 405 (GITQH) is G2. Residues 424 to 427 (DTPG) form a G3 region. GTP-binding positions include 424 to 428 (DTPGH) and 478 to 481 (NKID). Positions 478–481 (NKID) are G4. The tract at residues 514 to 516 (SAK) is G5.

It belongs to the TRAFAC class translation factor GTPase superfamily. Classic translation factor GTPase family. IF-2 subfamily.

The protein resides in the cytoplasm. One of the essential components for the initiation of protein synthesis. Protects formylmethionyl-tRNA from spontaneous hydrolysis and promotes its binding to the 30S ribosomal subunits. Also involved in the hydrolysis of GTP during the formation of the 70S ribosomal complex. In Nitrobacter winogradskyi (strain ATCC 25391 / DSM 10237 / CIP 104748 / NCIMB 11846 / Nb-255), this protein is Translation initiation factor IF-2.